A 932-amino-acid chain; its full sequence is Glycine dehydrogenase (decarboxylating) (932 aa).

Position 685 is an N6-(pyridoxal phosphate)lysine (Lys-685).

Belongs to the GcvP family. The glycine cleavage system is composed of four proteins: P, T, L and H. The cofactor is pyridoxal 5'-phosphate.

The enzyme catalyses N(6)-[(R)-lipoyl]-L-lysyl-[glycine-cleavage complex H protein] + glycine + H(+) = N(6)-[(R)-S(8)-aminomethyldihydrolipoyl]-L-lysyl-[glycine-cleavage complex H protein] + CO2. In terms of biological role, the glycine cleavage system catalyzes the degradation of glycine. The P protein binds the alpha-amino group of glycine through its pyridoxal phosphate cofactor; CO(2) is released and the remaining methylamine moiety is then transferred to the lipoamide cofactor of the H protein. The polypeptide is Glycine dehydrogenase (decarboxylating) (Brucella melitensis biotype 1 (strain ATCC 23456 / CCUG 17765 / NCTC 10094 / 16M)).